We begin with the raw amino-acid sequence, 311 residues long: Ornithine carbamoyltransferase (311 aa).

Carbamoyl phosphate-binding positions include 57–60 (STRT), Q84, R108, and 135–138 (HPCQ). Residues N166, D230, and 234-235 (SM) each bind L-ornithine. Carbamoyl phosphate contacts are provided by residues 270-271 (CL) and R298.

This sequence belongs to the aspartate/ornithine carbamoyltransferase superfamily. OTCase family.

The protein resides in the cytoplasm. It catalyses the reaction carbamoyl phosphate + L-ornithine = L-citrulline + phosphate + H(+). It functions in the pathway amino-acid biosynthesis; L-arginine biosynthesis; L-arginine from L-ornithine and carbamoyl phosphate: step 1/3. Functionally, reversibly catalyzes the transfer of the carbamoyl group from carbamoyl phosphate (CP) to the N(epsilon) atom of ornithine (ORN) to produce L-citrulline. The protein is Ornithine carbamoyltransferase of Carboxydothermus hydrogenoformans (strain ATCC BAA-161 / DSM 6008 / Z-2901).